A 338-amino-acid chain; its full sequence is Holliday junction branch migration complex subunit RuvB (338 aa).

The tract at residues 4–184 is large ATPase domain (RuvB-L); it reads SDRLVSGKAR…FGISHHLQYY (181 aa). ATP-binding positions include arginine 24, glycine 65, lysine 68, threonine 69, threonine 70, 131-133, arginine 174, tyrosine 184, and arginine 221; that span reads EDY. Threonine 69 is a binding site for Mg(2+). Positions 185-255 are small ATPAse domain (RuvB-S); it reads HHDELTQIVM…LADEALELLA (71 aa). Positions 258-338 are head domain (RuvB-H); it reads HLGFDALDRR…NIEVPDGRNS (81 aa). Residues arginine 294, arginine 313, and arginine 318 each contribute to the DNA site.

This sequence belongs to the RuvB family. Homohexamer. Forms an RuvA(8)-RuvB(12)-Holliday junction (HJ) complex. HJ DNA is sandwiched between 2 RuvA tetramers; dsDNA enters through RuvA and exits via RuvB. An RuvB hexamer assembles on each DNA strand where it exits the tetramer. Each RuvB hexamer is contacted by two RuvA subunits (via domain III) on 2 adjacent RuvB subunits; this complex drives branch migration. In the full resolvosome a probable DNA-RuvA(4)-RuvB(12)-RuvC(2) complex forms which resolves the HJ.

Its subcellular location is the cytoplasm. It catalyses the reaction ATP + H2O = ADP + phosphate + H(+). The RuvA-RuvB-RuvC complex processes Holliday junction (HJ) DNA during genetic recombination and DNA repair, while the RuvA-RuvB complex plays an important role in the rescue of blocked DNA replication forks via replication fork reversal (RFR). RuvA specifically binds to HJ cruciform DNA, conferring on it an open structure. The RuvB hexamer acts as an ATP-dependent pump, pulling dsDNA into and through the RuvAB complex. RuvB forms 2 homohexamers on either side of HJ DNA bound by 1 or 2 RuvA tetramers; 4 subunits per hexamer contact DNA at a time. Coordinated motions by a converter formed by DNA-disengaged RuvB subunits stimulates ATP hydrolysis and nucleotide exchange. Immobilization of the converter enables RuvB to convert the ATP-contained energy into a lever motion, pulling 2 nucleotides of DNA out of the RuvA tetramer per ATP hydrolyzed, thus driving DNA branch migration. The RuvB motors rotate together with the DNA substrate, which together with the progressing nucleotide cycle form the mechanistic basis for DNA recombination by continuous HJ branch migration. Branch migration allows RuvC to scan DNA until it finds its consensus sequence, where it cleaves and resolves cruciform DNA. The chain is Holliday junction branch migration complex subunit RuvB from Dichelobacter nodosus (strain VCS1703A).